Consider the following 349-residue polypeptide: S-adenosylmethionine:tRNA ribosyltransferase-isomerase (349 aa).

It belongs to the QueA family. Monomer.

The protein localises to the cytoplasm. The catalysed reaction is 7-aminomethyl-7-carbaguanosine(34) in tRNA + S-adenosyl-L-methionine = epoxyqueuosine(34) in tRNA + adenine + L-methionine + 2 H(+). It functions in the pathway tRNA modification; tRNA-queuosine biosynthesis. Functionally, transfers and isomerizes the ribose moiety from AdoMet to the 7-aminomethyl group of 7-deazaguanine (preQ1-tRNA) to give epoxyqueuosine (oQ-tRNA). The sequence is that of S-adenosylmethionine:tRNA ribosyltransferase-isomerase from Flavobacterium psychrophilum (strain ATCC 49511 / DSM 21280 / CIP 103535 / JIP02/86).